The primary structure comprises 365 residues: 4-hydroxy-tetrahydrodipicolinate synthase 1, chloroplastic (365 aa).

The transit peptide at 1–39 (MSALKNYGLISIDSALHFPRSNQLQSYKRRNAKWVSPIA) directs the protein to the chloroplast. A pyruvate-binding site is contributed by T108. Catalysis depends on Y194, which acts as the Proton donor/acceptor. Catalysis depends on K222, which acts as the Schiff-base intermediate with substrate. Residue I261 participates in pyruvate binding.

This sequence belongs to the DapA family.

The protein localises to the plastid. It is found in the chloroplast. The enzyme catalyses L-aspartate 4-semialdehyde + pyruvate = (2S,4S)-4-hydroxy-2,3,4,5-tetrahydrodipicolinate + H2O + H(+). The protein operates within amino-acid biosynthesis; L-lysine biosynthesis via DAP pathway; (S)-tetrahydrodipicolinate from L-aspartate: step 3/4. Catalyzes the condensation of (S)-aspartate-beta-semialdehyde [(S)-ASA] and pyruvate to 4-hydroxy-tetrahydrodipicolinate (HTPA). In Arabidopsis thaliana (Mouse-ear cress), this protein is 4-hydroxy-tetrahydrodipicolinate synthase 1, chloroplastic (DHDPS1).